A 477-amino-acid chain; its full sequence is Sulfate adenylyltransferase subunit 1 (477 aa).

In terms of domain architecture, tr-type G spans K22–L239. Positions G31–S38 are G1. G31 to S38 lines the GTP pocket. Positions G89 to D93 are G2. A G3 region spans residues D110–G113. Residues D110–H114 and N165–D168 contribute to the GTP site. Residues N165–D168 are G4. A G5 region spans residues S202–L204.

Belongs to the TRAFAC class translation factor GTPase superfamily. Classic translation factor GTPase family. CysN/NodQ subfamily. Heterodimer composed of CysD, the smaller subunit, and CysN.

The catalysed reaction is sulfate + ATP + H(+) = adenosine 5'-phosphosulfate + diphosphate. It participates in sulfur metabolism; hydrogen sulfide biosynthesis; sulfite from sulfate: step 1/3. In terms of biological role, with CysD forms the ATP sulfurylase (ATPS) that catalyzes the adenylation of sulfate producing adenosine 5'-phosphosulfate (APS) and diphosphate, the first enzymatic step in sulfur assimilation pathway. APS synthesis involves the formation of a high-energy phosphoric-sulfuric acid anhydride bond driven by GTP hydrolysis by CysN coupled to ATP hydrolysis by CysD. This chain is Sulfate adenylyltransferase subunit 1, found in Chromobacterium violaceum (strain ATCC 12472 / DSM 30191 / JCM 1249 / CCUG 213 / NBRC 12614 / NCIMB 9131 / NCTC 9757 / MK).